Here is a 112-residue protein sequence, read N- to C-terminus: T cell receptor alpha variable 21 (112 aa).

The N-terminal stretch at 1–19 (METLLGLLILWLQLQWVSS) is a signal peptide. The Ig-like domain maps to 21–112 (QEVTQIPAAL…DSATYLCAVR (92 aa)). Residues asparagine 41 and asparagine 82 are each glycosylated (N-linked (GlcNAc...) asparagine). Cysteines 42 and 109 form a disulfide.

Alpha-beta TR is a heterodimer composed of an alpha and beta chain; disulfide-linked. The alpha-beta TR is associated with the transmembrane signaling CD3 coreceptor proteins to form the TR-CD3 (TcR or TCR). The assembly of alpha-beta TR heterodimers with CD3 occurs in the endoplasmic reticulum where a single alpha-beta TR heterodimer associates with one CD3D-CD3E heterodimer, one CD3G-CD3E heterodimer and one CD247 homodimer forming a stable octameric structure. CD3D-CD3E and CD3G-CD3E heterodimers preferentially associate with TR alpha and TR beta chains, respectively. The association of the CD247 homodimer is the last step of TcR assembly in the endoplasmic reticulum and is required for transport to the cell surface.

Its subcellular location is the cell membrane. Its function is as follows. V region of the variable domain of T cell receptor (TR) alpha chain that participates in the antigen recognition. Alpha-beta T cell receptors are antigen specific receptors which are essential to the immune response and are present on the cell surface of T lymphocytes. Recognize peptide-major histocompatibility (MH) (pMH) complexes that are displayed by antigen presenting cells (APC), a prerequisite for efficient T cell adaptive immunity against pathogens. Binding of alpha-beta TR to pMH complex initiates TR-CD3 clustering on the cell surface and intracellular activation of LCK that phosphorylates the ITAM motifs of CD3G, CD3D, CD3E and CD247 enabling the recruitment of ZAP70. In turn ZAP70 phosphorylates LAT, which recruits numerous signaling molecules to form the LAT signalosome. The LAT signalosome propagates signal branching to three major signaling pathways, the calcium, the mitogen-activated protein kinase (MAPK) kinase and the nuclear factor NF-kappa-B (NF-kB) pathways, leading to the mobilization of transcription factors that are critical for gene expression and essential for T cell growth and differentiation. The T cell repertoire is generated in the thymus, by V-(D)-J rearrangement. This repertoire is then shaped by intrathymic selection events to generate a peripheral T cell pool of self-MH restricted, non-autoaggressive T cells. Post-thymic interaction of alpha-beta TR with the pMH complexes shapes TR structural and functional avidity. The protein is T cell receptor alpha variable 21 of Homo sapiens (Human).